We begin with the raw amino-acid sequence, 363 residues long: Flagellar P-ring protein (363 aa).

The signal sequence occupies residues 1–20; that stretch reads MKYKLVLAVAVLVFSLPSQA.

This sequence belongs to the FlgI family. As to quaternary structure, the basal body constitutes a major portion of the flagellar organelle and consists of four rings (L,P,S, and M) mounted on a central rod.

The protein resides in the periplasm. The protein localises to the bacterial flagellum basal body. Assembles around the rod to form the L-ring and probably protects the motor/basal body from shearing forces during rotation. The sequence is that of Flagellar P-ring protein from Shewanella baltica (strain OS223).